A 900-amino-acid chain; its full sequence is Chaperone protein ClpB 2 (900 aa).

The region spanning 15-154 is the Clp R domain; it reads PDRFSDPAWE…ESLLRQPSVS (140 aa). Repeat stretches follow at residues 18 to 81 and 91 to 154; these read FSDP…LADQ and IGED…PSVS. The tract at residues 151–183 is disordered; sequence PSVSPAPAPPPVPTAASAPAPTPRSAPAPRVMA. The segment covering 154-163 has biased composition (pro residues); it reads SPAPAPPPVP. The tract at residues 191-376 is NBD1; it reads ELEREPSALE…RRFQQVLIRE (186 aa). 244–251 contributes to the ATP binding site; that stretch reads GEPGVGKT. Residues 377-581 form a linker region; that stretch reads PDLELSLEIL…IADLVARWTG (205 aa). A coiled-coil region spans residues 427 to 557; that stretch reads IDLIDEAAAQ…LEASQAEAQS (131 aa). Residues 591-803 form an NBD2 region; sequence ERRKLLALES…RIDEVIRFRP (213 aa). 641 to 648 lines the ATP pocket; it reads GPTGVGKT. A C-terminal region spans residues 804 to 900; the sequence is LKVKDLVRIV…GASLEFEPLE (97 aa).

This sequence belongs to the ClpA/ClpB family. In terms of assembly, homohexamer. The oligomerization is ATP-dependent.

The protein resides in the cytoplasm. In terms of biological role, part of a stress-induced multi-chaperone system, it is involved in the recovery of the cell from heat-induced damage, in cooperation with DnaK, DnaJ and GrpE. Acts before DnaK, in the processing of protein aggregates. Protein binding stimulates the ATPase activity; ATP hydrolysis unfolds the denatured protein aggregates, which probably helps expose new hydrophobic binding sites on the surface of ClpB-bound aggregates, contributing to the solubilization and refolding of denatured protein aggregates by DnaK. The polypeptide is Chaperone protein ClpB 2 (clpB2) (Parasynechococcus marenigrum (strain WH8102)).